A 530-amino-acid polypeptide reads, in one-letter code: Cytochrome P450 monooxygenase apf7 (530 aa).

Residues 6 to 26 (VSPVSIWVFVIYAVTIIIAIY) form a helical membrane-spanning segment. A glycan (N-linked (GlcNAc...) asparagine) is linked at Asn-85. Cys-464 contacts heme.

The protein belongs to the cytochrome P450 family. It depends on heme as a cofactor.

The protein localises to the membrane. Its pathway is secondary metabolite biosynthesis. In terms of biological role, cytochrome P450 monooxygenase; part of the gene cluster that mediates the biosynthesis of the cyclic tetrapeptide apicidin F (APF). The non-ribosomal peptide synthetase apf1 incorporates four different amino acids to produce apicidin F: L-phenylalanine, D-pipecolic acid (D-pip), N-methoxy-L-tryptophan and L-2-aminooctanedioic acid. L-Phenylalanine is the only proteinogenic amino acid directly used by apf1. The 3 other apf1 substrates are non-proteinogenic and have to be modified by other enzymes of the cluster. Lysine is converted to delta-1-pyrroline-5-carboxylate (P5C) which is reduced to L-pipecolic acid (L-pip) by apf3. L-pip is epimerized to D-pip, probably by apf1 activity, prior to incorporation. L-Tryptophan is N-oxidyzed by one of the cytochrome P450 monooxygenases (apf7 or apf8), and further methylated at the hydroxy group by the O-methyltransferase apf6 to yield N-methoxy-L-tryptophan. The synthesis of the fourth apf1 substrate is more complex. The fatty acid synthase apf5 is involved in the synthesis of the octanoic acid backbone of L-2-aminooctanedioic acid by fixing one acetyl-CoA unit and three malonyl-CoA units. Then one of the cytochrome P450 monooxygenases (apf7 or apf8) may oxidize this backbone to 2-oxooctanoic acid. The aminotransferase apf4 is predicted to catalyze the exchange of the keto group with an amino group. The next step would be the oxidation of 2-aminooctanoic acid by one of the cytochrome P450 monooxygenases (apf7 or apf8). The last step is the oxidation of 2-amino-8-hydroxyoctanoic acid to 2-aminooctanedioic acid is catalyzed by the FAD-dependent monooxygenase apf9. In Gibberella fujikuroi (strain CBS 195.34 / IMI 58289 / NRRL A-6831) (Bakanae and foot rot disease fungus), this protein is Cytochrome P450 monooxygenase apf7.